Reading from the N-terminus, the 331-residue chain is 6-phosphogluconolactonase (331 aa).

This sequence belongs to the cycloisomerase 2 family.

The catalysed reaction is 6-phospho-D-glucono-1,5-lactone + H2O = 6-phospho-D-gluconate + H(+). It functions in the pathway carbohydrate degradation; pentose phosphate pathway; D-ribulose 5-phosphate from D-glucose 6-phosphate (oxidative stage): step 2/3. Catalyzes the hydrolysis of 6-phosphogluconolactone to 6-phosphogluconate. The sequence is that of 6-phosphogluconolactonase from Salmonella gallinarum (strain 287/91 / NCTC 13346).